The primary structure comprises 329 residues: Ferredoxin--NADP reductase 2 (329 aa).

FAD is bound by residues Thr18, Glu37, Gln45, Tyr50, Val90, Phe124, Asp285, and Ser326.

Belongs to the ferredoxin--NADP reductase type 2 family. Homodimer. It depends on FAD as a cofactor.

The catalysed reaction is 2 reduced [2Fe-2S]-[ferredoxin] + NADP(+) + H(+) = 2 oxidized [2Fe-2S]-[ferredoxin] + NADPH. In Bacillus cytotoxicus (strain DSM 22905 / CIP 110041 / 391-98 / NVH 391-98), this protein is Ferredoxin--NADP reductase 2.